We begin with the raw amino-acid sequence, 458 residues long: 3-isopropylmalate dehydratase large subunit (458 aa).

C339, C399, and C402 together coordinate [4Fe-4S] cluster.

It belongs to the aconitase/IPM isomerase family. LeuC type 1 subfamily. Heterodimer of LeuC and LeuD. The cofactor is [4Fe-4S] cluster.

It carries out the reaction (2R,3S)-3-isopropylmalate = (2S)-2-isopropylmalate. The protein operates within amino-acid biosynthesis; L-leucine biosynthesis; L-leucine from 3-methyl-2-oxobutanoate: step 2/4. Its function is as follows. Catalyzes the isomerization between 2-isopropylmalate and 3-isopropylmalate, via the formation of 2-isopropylmaleate. The chain is 3-isopropylmalate dehydratase large subunit from Lactococcus lactis subsp. cremoris (strain SK11).